Here is a 71-residue protein sequence, read N- to C-terminus: Protein CYSTEINE-RICH TRANSMEMBRANE MODULE 8 (71 aa).

Polar residues predominate over residues 1 to 22 (MNQSAQNYFSVQKPSETSSGPY). The disordered stretch occupies residues 1 to 35 (MNQSAQNYFSVQKPSETSSGPYTSPPPIGYPTRDA). Residues 48–64 (NSKGVNPEGCCAAICCC) traverse the membrane as a helical segment.

The protein belongs to the CYSTM1 family. Mostly expressed in stems, siliques, roots and flowers and, to a lower extent, in leaves.

The protein resides in the membrane. The protein localises to the nucleus. Functionally, involved in resistance to abiotic stress. The polypeptide is Protein CYSTEINE-RICH TRANSMEMBRANE MODULE 8 (Arabidopsis thaliana (Mouse-ear cress)).